Reading from the N-terminus, the 137-residue chain is Actin-depolymerizing factor 12 (137 aa).

The residue at position 6 (Ser6) is a Phosphoserine. Residues Gly7–Leu137 form the ADF-H domain.

The protein belongs to the actin-binding proteins ADF family. In terms of tissue distribution, specifically expressed in pollen.

It is found in the cytoplasm. Its subcellular location is the cytoskeleton. Actin-depolymerizing protein. Severs actin filaments (F-actin) and binds to actin monomers. This Arabidopsis thaliana (Mouse-ear cress) protein is Actin-depolymerizing factor 12.